We begin with the raw amino-acid sequence, 357 residues long: UDP-N-acetylglucosamine--N-acetylmuramyl-(pentapeptide) pyrophosphoryl-undecaprenol N-acetylglucosamine transferase (357 aa).

UDP-N-acetyl-alpha-D-glucosamine-binding positions include 10-12 (TGG), asparagine 124, serine 189, isoleucine 244, and glutamine 289.

The protein belongs to the glycosyltransferase 28 family. MurG subfamily.

It is found in the cell membrane. It catalyses the reaction Mur2Ac(oyl-L-Ala-gamma-D-Glu-L-Lys-D-Ala-D-Ala)-di-trans,octa-cis-undecaprenyl diphosphate + UDP-N-acetyl-alpha-D-glucosamine = beta-D-GlcNAc-(1-&gt;4)-Mur2Ac(oyl-L-Ala-gamma-D-Glu-L-Lys-D-Ala-D-Ala)-di-trans,octa-cis-undecaprenyl diphosphate + UDP + H(+). It functions in the pathway cell wall biogenesis; peptidoglycan biosynthesis. In terms of biological role, cell wall formation. Catalyzes the transfer of a GlcNAc subunit on undecaprenyl-pyrophosphoryl-MurNAc-pentapeptide (lipid intermediate I) to form undecaprenyl-pyrophosphoryl-MurNAc-(pentapeptide)GlcNAc (lipid intermediate II). This is UDP-N-acetylglucosamine--N-acetylmuramyl-(pentapeptide) pyrophosphoryl-undecaprenol N-acetylglucosamine transferase from Lactococcus lactis subsp. lactis (strain IL1403) (Streptococcus lactis).